We begin with the raw amino-acid sequence, 158 residues long: Transcription elongation factor GreB (158 aa).

Residues 53-75 (KRRLREIDRRVRFLTKRLEVLQI) are a coiled coil.

Belongs to the GreA/GreB family. GreB subfamily.

Functionally, necessary for efficient RNA polymerase transcription elongation past template-encoded arresting sites. The arresting sites in DNA have the property of trapping a certain fraction of elongating RNA polymerases that pass through, resulting in locked ternary complexes. Cleavage of the nascent transcript by cleavage factors such as GreA or GreB allows the resumption of elongation from the new 3'terminus. GreB releases sequences of up to 9 nucleotides in length. The chain is Transcription elongation factor GreB from Pasteurella multocida (strain Pm70).